The primary structure comprises 219 residues: Small ribosomal subunit protein uS3 (219 aa).

A KH type-2 domain is found at I38–K106.

This sequence belongs to the universal ribosomal protein uS3 family. In terms of assembly, part of the 30S ribosomal subunit. Forms a tight complex with proteins S10 and S14.

Binds the lower part of the 30S subunit head. Binds mRNA in the 70S ribosome, positioning it for translation. The protein is Small ribosomal subunit protein uS3 of Bacillus thuringiensis (strain Al Hakam).